The primary structure comprises 294 residues: Survival motor neuron protein (294 aa).

Residues 1–12 (MAMSSGGSGGGV) show a composition bias toward gly residues. The tract at residues 1–32 (MAMSSGGSGGGVPEQEDSVLFRRGTGQSDDSD) is disordered. Ala-2 is modified (N-acetylalanine). Residues Ser-4, Ser-5, and Ser-8 each carry the phosphoserine; by PKA modification. Thr-25 is modified (phosphothreonine). Residues 26 to 51 (GQSDDSDIWDDTALIKAYDKAVASFK) are interacts with GEMIN2. 2 positions are modified to phosphoserine: Ser-28 and Ser-31. A Glycyl lysine isopeptide (Lys-Gly) (interchain with G-Cter in SUMO2) cross-link involves residue Lys-51. Residues 59 to 88 (ICETSGKPKTTPKRKPAKKNKSQKKNTAAS) form a disordered region. Over residues 68–82 (TTPKRKPAKKNKSQK) the composition is skewed to basic residues. Thr-69 bears the Phosphothreonine mark. Thr-85 carries the post-translational modification Phosphothreonine; by PKA. Residues 91-151 (QWKVGDKCSA…LSPICEVANN (61 aa)) form the Tudor domain. Residues 97 to 209 (KCSAIWSEDG…MPGPRLGPGK (113 aa)) are required for interaction with RPP20/POP7. Positions 156-166 (AQENENESQVS) are enriched in low complexity. A disordered region spans residues 156-222 (AQENENESQV…KFNGPPPPPP (67 aa)). A Phosphoserine; by PKA modification is found at Ser-187. Over residues 194 to 204 (LPPPPPMPGPR) the composition is skewed to pro residues. Low complexity predominate over residues 206-215 (GPGKPGLKFN). Lys-209 participates in a covalent cross-link: Glycyl lysine isopeptide (Lys-Gly) (interchain with G-Cter in SUMO2). The tract at residues 240-267 (PPIIPPPPPICPDSLDDADALGSMLISW) is P2 (binding site for SNRPB). Residues 252–280 (DSLDDADALGSMLISWYMSGYHTGYYMGF) are involved in homooligomerization. A required for interaction with SYNCRIP region spans residues 279–294 (GFRQNQKEGRCSHSLN).

Belongs to the SMN family. Homooligomer; may form higher order homooligomers in the dimer to octamer range. Part of the core SMN complex that contains SMN1, GEMIN2/SIP1, DDX20/GEMIN3, GEMIN4, GEMIN5, GEMIN6, GEMIN7, GEMIN8 and STRAP/UNRIP. Part of the SMN-Sm complex that contains SMN1, GEMIN2/SIP1, DDX20/GEMIN3, GEMIN4, GEMIN5, GEMIN6, GEMIN7, GEMIN8, STRAP/UNRIP and the Sm proteins SNRPB, SNRPD1, SNRPD2, SNRPD3, SNRPE, SNRPF and SNRPG. Component of an import snRNP complex composed of KPNB1, RNUT1, SMN1 and ZNF259. Interacts with DDX20, FBL, NOLA1, RNUT1, SYNCRIP and with several spliceosomal snRNP core Sm proteins, including SNRPB, SNRPD1, SNRPD2, SNRPD3, SNRPE and ILF3. Interacts with GEMIN2; the interaction is direct. Interacts with GEMIN3; the interaction is direct. Interacts with GEMIN8; the interaction is direct. Interacts with SNRPB; the interaction is direct. Interacts (via Tudor domain) with SNRPD1 (via C-terminus); the interaction is direct. Interacts with SNRPD2; the interaction is direct. Interacts (via Tudor domain) with SNRPD3 (via C-terminus); the interaction is direct. Interacts with SNRPE; the interaction is direct. Interacts with OSTF1, LSM10, LSM11 and RPP20/POP7. Interacts (via C-terminal region) with ZPR1 (via C-terminal region). Interacts (via Tudor domain) with COIL. Interacts with SETX; recruits SETX to POLR2A. Interacts with POLR2A (via the C-terminal domain (CTD)). Interacts with PRMT5. Interacts with XRN2. Interacts (via C-terminus) with FMR1 (via C-terminus); the interaction is direct and occurs in a RNA-independent manner. Interacts (via Tudor domain) with SF3B2 ('Arg-508'-methylated form). Interacts with WRAP53/TCAB1. Interacts (via Tudor domain) with ELAVL4 in an RNA-independent manner; the interaction is required for localization of ELAVL4 to RNA granules. Interacts with FRG1. In terms of assembly, does not homooligomerize. Does not interact with SNRPB. In terms of tissue distribution, expressed in a wide variety of tissues. Expressed at high levels in brain, kidney and liver, moderate levels in skeletal and cardiac muscle, and low levels in fibroblasts and lymphocytes. Also seen at high levels in spinal cord. Present in osteoclasts and mononuclear cells (at protein level).

Its subcellular location is the nucleus. It localises to the gem. The protein localises to the cajal body. It is found in the cytoplasm. The protein resides in the cytoplasmic granule. Its subcellular location is the perikaryon. It localises to the cell projection. The protein localises to the neuron projection. It is found in the axon. The protein resides in the myofibril. Its subcellular location is the sarcomere. It localises to the z line. Its function is as follows. The SMN complex catalyzes the assembly of small nuclear ribonucleoproteins (snRNPs), the building blocks of the spliceosome, and thereby plays an important role in the splicing of cellular pre-mRNAs. Most spliceosomal snRNPs contain a common set of Sm proteins SNRPB, SNRPD1, SNRPD2, SNRPD3, SNRPE, SNRPF and SNRPG that assemble in a heptameric protein ring on the Sm site of the small nuclear RNA to form the core snRNP (Sm core). In the cytosol, the Sm proteins SNRPD1, SNRPD2, SNRPE, SNRPF and SNRPG are trapped in an inactive 6S pICln-Sm complex by the chaperone CLNS1A that controls the assembly of the core snRNP. To assemble core snRNPs, the SMN complex accepts the trapped 5Sm proteins from CLNS1A forming an intermediate. Within the SMN complex, SMN1 acts as a structural backbone and together with GEMIN2 it gathers the Sm complex subunits. Binding of snRNA inside 5Sm ultimately triggers eviction of the SMN complex, thereby allowing binding of SNRPD3 and SNRPB to complete assembly of the core snRNP. Ensures the correct splicing of U12 intron-containing genes that may be important for normal motor and proprioceptive neurons development. Also required for resolving RNA-DNA hybrids created by RNA polymerase II, that form R-loop in transcription terminal regions, an important step in proper transcription termination. May also play a role in the metabolism of small nucleolar ribonucleoprotein (snoRNPs). The sequence is that of Survival motor neuron protein (SMN1) from Homo sapiens (Human).